A 303-amino-acid polypeptide reads, in one-letter code: MTSRTEAVKAYLLDLQDRICSALETEDGGARFVEDAWVREAGGGGRTRVIGDGKLIEKGGVNFSHVFGSGLPPSASAHRPELAGRGFEALGVSLVIHPHNPHVPTSHANVRFFIAEKEGEEAVWWFGGGFDLTPYYGNEEDCIHWHRVAEQACAPFGADVYPRYKAWCDRYFHIKHRGEPRGIGGLFFDDLNEWGFDTCFAFIRAIGDAYVDAYLPIVQRRKDTPYTAEQREFQEYRRGRYVEFNLVYDRGTLFGLQSGGRTESILMSLPPQVRWGYDWKAAPGSEEARLTEYFLQDRDWLAH.

Ser-93 serves as a coordination point for substrate. The a divalent metal cation site is built by His-97 and His-107. Residue His-107 is the Proton donor of the active site. 109–111 (NVR) provides a ligand contact to substrate. Residues His-146 and His-176 each contribute to the a divalent metal cation site. An important for dimerization region spans residues 241 to 276 (YVEFNLVYDRGTLFGLQSGGRTESILMSLPPQVRWG). 259–261 (GGR) lines the substrate pocket.

It belongs to the aerobic coproporphyrinogen-III oxidase family. As to quaternary structure, homodimer. A divalent metal cation is required as a cofactor.

It localises to the cytoplasm. The catalysed reaction is coproporphyrinogen III + O2 + 2 H(+) = protoporphyrinogen IX + 2 CO2 + 2 H2O. It functions in the pathway porphyrin-containing compound metabolism; protoporphyrin-IX biosynthesis; protoporphyrinogen-IX from coproporphyrinogen-III (O2 route): step 1/1. Involved in the heme biosynthesis. Catalyzes the aerobic oxidative decarboxylation of propionate groups of rings A and B of coproporphyrinogen-III to yield the vinyl groups in protoporphyrinogen-IX. The polypeptide is Oxygen-dependent coproporphyrinogen-III oxidase (Pseudomonas putida (strain W619)).